A 727-amino-acid chain; its full sequence is Translation initiation factor IF-2, mitochondrial (727 aa).

Residues 1-29 (MNQKLLKLENLLRFHTIYRQLHSLCQRRA) constitute a mitochondrion transit peptide. Positions 178-348 (PRSPVVTIMG…VALAEMLELK (171 aa)) constitute a tr-type G domain. The G1 stretch occupies residues 187–194 (GHVDHGKT). 187–194 (GHVDHGKT) is a binding site for GTP. The interval 212–216 (GITQH) is G2. GTP-binding positions include 234-237 (DTPG) and 288-291 (NKCD). The tract at residues 234–237 (DTPG) is G3. The segment at 288 to 291 (NKCD) is G4. The tract at residues 324–326 (SAL) is G5. Thr688 bears the Phosphothreonine mark.

Belongs to the TRAFAC class translation factor GTPase superfamily. Classic translation factor GTPase family. IF-2 subfamily. Monomer. In terms of tissue distribution, expressed in all tissues examined. Highest level in skeletal muscle.

Its subcellular location is the mitochondrion. Its function is as follows. One of the essential components for the initiation of protein synthesis. Protects formylmethionyl-tRNA from spontaneous hydrolysis and promotes its binding to the 30S ribosomal subunits. Also involved in the hydrolysis of GTP during the formation of the 70S ribosomal complex. This Homo sapiens (Human) protein is Translation initiation factor IF-2, mitochondrial (MTIF2).